Consider the following 155-residue polypeptide: Putative pre-16S rRNA nuclease (155 aa).

Belongs to the YqgF nuclease family.

Its subcellular location is the cytoplasm. Its function is as follows. Could be a nuclease involved in processing of the 5'-end of pre-16S rRNA. This chain is Putative pre-16S rRNA nuclease, found in Novosphingobium aromaticivorans (strain ATCC 700278 / DSM 12444 / CCUG 56034 / CIP 105152 / NBRC 16084 / F199).